A 734-amino-acid polypeptide reads, in one-letter code: MAKERGLISPSDFAQLQKYMEYSTKKVSDVLKLFEDGEMAEYLQGDAIGYEGFQQFLKIYLEVDNVPDHLSQALFQSFQTGYYIEDTVREDVVCLSDVSCYFSLLEGGRPEDKLEFTFKLYDTDRNGILDSSEVDRIIIQMMRMAEYLDWDVSELRPILQEMMKEIDYDGSGSVSLAEWLRAGATTVPLLVLLGLEMTLKDNGQHMWRPKRFPRPVYCNLCESSIGLGKQGLSCNLCKYIVHDQCAMKALPCEVSTYAKSRKDIGVQSHVWVRGGCESGRCDRCQKKIRIYHSLVGLHCVWCHLEIHDDCLPAMGHECDCGLLRDHILPPSSIYPSVLASGQERKTSKISQKTMDDLSLSTSEALRIDPVSNTHPLLVFVNPKSGGKQGERVLWKFQYLLNPRQVFNLLKDGPEPGLRFFRDVPDYRILVCGGDGTVGWILESIDKANLPFVPPVAVLPLGTGNDLARCLRWGGGYEGQNLGKILKDLETSKVVHMDRWSVEVIPQQTEEKSDPVPFQIINNYFSIGVDASIAHRFHIMREKYPEKFNSRMKNKLWYFEFATSESIFSTCKKLEESLTVEICGKPLDLSNLSLEGIAVLNIPSTHGGSNLWGDTKRPHGDIHGINQALGATAKVITDPDILKTCVPDLSDKRLEVVGLEGAIEIGQIYTKLKNAGHRLAKCSEITFHTTKTLPMQIDGEPWMQTPCTIKITHRNQMPMLVGPPPRSSNFFGFLC.

EF-hand domains follow at residues 109–144 and 154–189; these read RPED…MMRM and ELRP…TVPL. Asp-122, Asp-124, Asn-126, Glu-133, Asp-167, Asp-169, Ser-171, Ser-173, and Glu-178 together coordinate Ca(2+). 2 consecutive Phorbol-ester/DAG-type zinc fingers follow at residues 204–252 and 268–318; these read QHMW…ALPC and SHVW…GHEC. Residues 371 to 505 enclose the DAGKc domain; sequence SNTHPLLVFV…MDRWSVEVIP (135 aa). Lys-483 carries the post-translational modification N6-acetyllysine.

It belongs to the eukaryotic diacylglycerol kinase family. In terms of assembly, monomer.

Its subcellular location is the cytoplasm. The protein resides in the cytosol. It carries out the reaction a 1,2-diacyl-sn-glycerol + ATP = a 1,2-diacyl-sn-glycero-3-phosphate + ADP + H(+). It catalyses the reaction a 1-O-alkyl-sn-glycerol + ATP = a 1-O-alkyl-sn-glycero-3-phosphate + ADP + H(+). The enzyme catalyses 1-O-alkyl-2-acyl-sn-glycerol + ATP = 1-O-alkyl-2-acyl-sn-glycero-3-phosphate + ADP + H(+). The catalysed reaction is 1,2-dihexadecanoyl-sn-glycerol + ATP = 1,2-dihexadecanoyl-sn-glycero-3-phosphate + ADP + H(+). It carries out the reaction 1-hexadecanoyl-2-(9Z-octadecenoyl)-sn-glycerol + ATP = 1-hexadecanoyl-2-(9Z-octadecenoyl)-sn-glycero-3-phosphate + ADP + H(+). It catalyses the reaction 2-(9Z-octadecenoyl)-glycerol + ATP = 2-(9Z-octadecenoyl)-sn-glycero-3-phosphate + ADP + H(+). The enzyme catalyses 1,2-di-(9Z-octadecenoyl)-sn-glycerol + ATP = 1,2-di-(9Z-octadecenoyl)-sn-glycero-3-phosphate + ADP + H(+). The catalysed reaction is 1-octadecanoyl-2-(5Z,8Z,11Z,14Z-eicosatetraenoyl)-sn-glycerol + ATP = 1-octadecanoyl-2-(5Z,8Z,11Z,14Z-eicosatetraenoyl)-sn-glycero-3-phosphate + ADP + H(+). It carries out the reaction 1,2-didecanoyl-sn-glycerol + ATP = 1,2-didecanoyl-sn-glycero-3-phosphate + ADP + H(+). It catalyses the reaction 1-O-hexadecyl-2-acetyl-sn-glycerol + ATP = 1-O-hexadecyl-2-acetyl-sn-glycero-3-phosphate + ADP + H(+). The enzyme catalyses 1-O-hexadecyl-2-(5Z,8Z,11Z,14Z-eicosatetraenoyl)-sn-glycerol + ATP = 1-O-hexadecyl-2-(5Z,8Z,11Z,14Z-eicosatetraenoyl)-sn-glycero-3-phosphate + ADP + H(+). The catalysed reaction is 1-O-hexadecyl-2-(9Z-octadecenoyl)-sn-glycerol + ATP = 1-O-hexadecyl-2-(9Z-octadecenoyl)-sn-glycero-3-phosphate + ADP + H(+). It carries out the reaction 1-O-hexadecyl-sn-glycerol + ATP = 1-O-hexadecyl-sn-glycero-3-phosphate + ADP + H(+). It participates in lipid metabolism; glycerolipid metabolism. Its activity is regulated as follows. Stimulated by calcium and phosphatidylserine. In terms of biological role, diacylglycerol kinase that converts diacylglycerol/DAG into phosphatidic acid/phosphatidate/PA and regulates the respective levels of these two bioactive lipids. Thereby, acts as a central switch between the signaling pathways activated by these second messengers with different cellular targets and opposite effects in numerous biological processes. Also plays an important role in the biosynthesis of complex lipids. Can also phosphorylate 1-alkyl-2-acylglycerol in vitro as efficiently as diacylglycerol provided it contains an arachidonoyl group. Also involved in the production of alkyl-lysophosphatidic acid, another bioactive lipid, through the phosphorylation of 1-alkyl-2-acetyl glycerol. This Bos taurus (Bovine) protein is Diacylglycerol kinase alpha (DGKA).